The sequence spans 332 residues: Serine, glycine, tyrosine and glutamine-rich protein (332 aa).

An N-terminal signal peptide occupies residues 1 to 17 (MMKTVLLLVVLVGVAYC). Positions 39–81 (SSSSSSSSSSGGGGSSGGGASGGGGGGGSSGGGGASGGGGGGS) are disordered. The segment covering 48-81 (SGGGGSSGGGASGGGGGGGSSGGGGASGGGGGGS) has biased composition (gly residues).

As to expression, prismatic layer of shell (at protein level). Expressed primarily in the mantle with highest level in the mantle edge and lower level in the mantle pallium.

It localises to the secreted. The chain is Serine, glycine, tyrosine and glutamine-rich protein from Margaritifera margaritifera (Freshwater pearl mussel).